Consider the following 381-residue polypeptide: Phosphatidyl-myo-inositol mannosyltransferase (381 aa).

Residues Tyr9 and Gly16 each coordinate GDP-alpha-D-mannose. A 1,2-diacyl-sn-glycero-3-phospho-(1D-myo-inositol) contacts are provided by residues Gln18, 69 to 70, and Arg75; that span reads FN. Residues Arg204, 209 to 210, 251 to 253, Arg256, 274 to 278, and Glu282 each bind GDP-alpha-D-mannose; these read RK, LDD, and ESFGI.

It belongs to the glycosyltransferase group 1 family. Glycosyltransferase 4 subfamily. Monomer. Mg(2+) is required as a cofactor.

It localises to the cell membrane. It carries out the reaction a 1,2-diacyl-sn-glycero-3-phospho-(1D-myo-inositol) + GDP-alpha-D-mannose = a 1,2-diacyl-sn-glycero-3-phospho-[alpha-D-mannopyranosyl-(1&lt;-&gt;6)-D-myo-inositol] + GDP + H(+). It functions in the pathway phospholipid metabolism; phosphatidylinositol metabolism. Functionally, involved in the biosynthesis of phosphatidyl-myo-inositol mannosides (PIM) which are early precursors in the biosynthesis of lipomannans (LM) and lipoarabinomannans (LAM). Catalyzes the addition of a mannosyl residue from GDP-D-mannose (GDP-Man) to the position 2 of the carrier lipid phosphatidyl-myo-inositol (PI) to generate a phosphatidyl-myo-inositol bearing an alpha-1,2-linked mannose residue (PIM1). The chain is Phosphatidyl-myo-inositol mannosyltransferase from Propionibacterium freudenreichii subsp. shermanii (strain ATCC 9614 / DSM 4902 / CIP 103027 / NCIMB 8099 / CIRM-BIA1).